The primary structure comprises 104 residues: Acetylcholine receptor subunit alpha (104 aa).

Residues 1 to 104 are Extracellular-facing; that stretch reads NPPAIFKSYC…YFIVNVIIPC (104 aa). 2 disulfides stabilise this stretch: Cys10/Cys24 and Cys74/Cys75. A glycan (N-linked (GlcNAc...) asparagine) is linked at Asn23.

This sequence belongs to the ligand-gated ion channel (TC 1.A.9) family. Acetylcholine receptor (TC 1.A.9.1) subfamily. Alpha-1/CHRNA1 sub-subfamily. In terms of assembly, one of the alpha chains that assemble within the acetylcholine receptor, a pentamer of two alpha chains, a beta, a delta, and a gamma or epsilon chains.

The protein localises to the postsynaptic cell membrane. It localises to the cell membrane. The catalysed reaction is K(+)(in) = K(+)(out). The enzyme catalyses Na(+)(in) = Na(+)(out). In terms of biological role, upon acetylcholine binding, the AChR responds by an extensive change in conformation that affects all subunits and leads to opening of an ion-conducting channel across the plasma membrane. The polypeptide is Acetylcholine receptor subunit alpha (CHRNA1) (Naja naja (Indian cobra)).